The chain runs to 74 residues: Serine rich endogenous peptide 23 (74 aa).

The N-terminal stretch at 1-25 is a signal peptide; that stretch reads MNKVVVYVLALSILLFFGLPNTTLA. Residues 52–66 carry the SCOOP motif motif; it reads KIAVGGSDSVRAHSK. Positions 58 to 60 match the SxS motif essential for MIK2 binding motif; it reads SDS.

The protein belongs to the serine rich endogenous peptide (SCOOP) phytocytokine family. In terms of assembly, interacts with MIK2 (via extracellular leucine-rich repeat domain); this interaction triggers the formation of complex between MIK2 and the BAK1/SERK3 and SERK4 coreceptors, and subsequent BAK1 activation by phosphorylation. Mostly expressed in roots, and, to a lower extent, in seedlings shoots.

It localises to the cell membrane. The protein resides in the secreted. The protein localises to the extracellular space. It is found in the apoplast. In terms of biological role, brassicaceae-specific phytocytokine (plant endogenous peptide released into the apoplast) perceived by MIK2 in a BAK1/SERK3 and SERK4 coreceptors-dependent manner, that modulates various physiological and antimicrobial processes including growth prevention and reactive oxygen species (ROS) response regulation. Inhibits root growth. The polypeptide is Serine rich endogenous peptide 23 (Arabidopsis thaliana (Mouse-ear cress)).